Reading from the N-terminus, the 188-residue chain is uncharacterized protein (188 aa).

Residues 1–23 form the signal peptide; sequence MFKGQKTLAALAVSLLFTAPVYA. Cys42 and Cys81 form a disulfide bridge.

It belongs to the fimbrial protein family.

It localises to the fimbrium. This is an uncharacterized protein from Escherichia coli (strain K12).